A 342-amino-acid polypeptide reads, in one-letter code: ATP synthase subunit a (342 aa).

The next 8 helical transmembrane spans lie at 11–31 (GLIKVIALVVPFLLNVNAFAS), 109–129 (HVVTLWVVSAIVLIVFTIIGS), 170–190 (YLPYLLTVFMFVLLCNVLGLV), 199–219 (NINVTLTLATFTFVLTQIAAL), 238–258 (ALWIIMIPIEFIGLFTKPVAL), 262–282 (LFANMTAGHIVILSLIFISFI), 287–307 (IVAVAMSVPFSIFIYLLEIFV), and 308–328 (AFLQAYIFTMLSALFIGLASA).

The protein belongs to the ATPase A chain family. In terms of assembly, F-type ATPases have 2 components, CF(1) - the catalytic core - and CF(0) - the membrane proton channel. CF(1) has five subunits: alpha(3), beta(3), gamma(1), delta(1), epsilon(1). CF(0) has four main subunits: a, b, b' and c.

The protein resides in the cell inner membrane. Functionally, key component of the proton channel; it plays a direct role in the translocation of protons across the membrane. In Chlorobium phaeobacteroides (strain DSM 266 / SMG 266 / 2430), this protein is ATP synthase subunit a.